A 131-amino-acid polypeptide reads, in one-letter code: D-ribose pyranase (131 aa).

His-20 functions as the Proton donor in the catalytic mechanism. Substrate contacts are provided by residues Asp-28, His-98, and 120-122; that span reads YAN.

It belongs to the RbsD / FucU family. RbsD subfamily. In terms of assembly, homodecamer.

It is found in the cytoplasm. It carries out the reaction beta-D-ribopyranose = beta-D-ribofuranose. Its pathway is carbohydrate metabolism; D-ribose degradation; D-ribose 5-phosphate from beta-D-ribopyranose: step 1/2. Catalyzes the interconversion of beta-pyran and beta-furan forms of D-ribose. The chain is D-ribose pyranase from Clostridium perfringens (strain ATCC 13124 / DSM 756 / JCM 1290 / NCIMB 6125 / NCTC 8237 / Type A).